We begin with the raw amino-acid sequence, 152 residues long: MVVQKSVVKSRVFGELEVSEENIIFFEEGIPAFENLKKFVIVKEDQSPFYWLQSVEDKDIAFVIINPFEIKPDYEFDLPDEVVNKLEITSAQDVAVFCIVVIPEDVKQTRVNLKAPIIINVHKRKGIQYLLDDERYPLRYYLFENLNSDEQK.

The protein belongs to the FliW family. In terms of assembly, interacts with translational regulator CsrA and flagellin(s).

It localises to the cytoplasm. Acts as an anti-CsrA protein, binds CsrA and prevents it from repressing translation of its target genes, one of which is flagellin. Binds to flagellin and participates in the assembly of the flagellum. This chain is Flagellar assembly factor FliW, found in Caldicellulosiruptor bescii (strain ATCC BAA-1888 / DSM 6725 / KCTC 15123 / Z-1320) (Anaerocellum thermophilum).